Reading from the N-terminus, the 430-residue chain is Evolutionarily conserved signaling intermediate in Toll pathway, mitochondrial (430 aa).

A mitochondrion-targeting transit peptide spans 1–48 (MSWVQATLLARGLCRAWGGICRAALPGTSISQVPRQLPRGLHCSAAPH). The tract at residues 41 to 66 (LHCSAAPHSSEQSLVSSPPEPRQRPT) is disordered. Polar residues predominate over residues 47–56 (PHSSEQSLVS). A Glycyl lysine isopeptide (Lys-Gly) (interchain with G-Cter in ubiquitin) cross-link involves residue K372. The tract at residues 400–430 (LHTSSAGLEEPPPPEDHEEDDSRQRQQQGQS) is disordered. A compositionally biased stretch (acidic residues) spans 411-420 (PPPEDHEEDD).

It belongs to the ECSIT family. As to quaternary structure, interacts with MAP3K1, SMAD4 and TRAF6. Interacts with SMAD1 only after BMP4-treatment. Part of the mitochondrial complex I assembly/MCIA complex that comprises at least the core subunits TMEM126B, NDUFAF1, ECSIT and ACAD9 and complement subunits such as COA1 and TMEM186. Interacts with NDUFAF1. Interacts with ACAD9. Interacts with TRIM59. Interacts with TMEM70 and TMEM242. Interacts (when ubiquitinated) with NF-kappa-B subunits RELA and NFKB1. Interacts with RIGI, IFIT1 and MAVS; these interactions promote RLR-mediated type I IFN induction. Interacts with SQSTM1; this interaction inhibits TLR4 signaling via functional regulation of the TRAF6-ECSIT complex. Interacts with cereblon/CRBN; this interaction inhibits the ubiquitination of ECSIT. Ubiquitinated on Lys-372; leading to translocation in the nucleus together with RELA and NFKB1 and expression of NF-kappa-B-dependent genes.

It localises to the cytoplasm. Its subcellular location is the nucleus. The protein resides in the mitochondrion. Functionally, adapter protein that plays a role in different signaling pathways including TLRs and IL-1 pathways or innate antiviral induction signaling. Plays a role in the activation of NF-kappa-B by forming a signal complex with TRAF6 and TAK1/MAP3K7 to activate TAK1/MAP3K7 leading to activation of IKKs. Once ubiquitinated, interacts with the dissociated RELA and NFKB1 proteins and translocates to the nucleus where it induces NF-kappa-B-dependent gene expression. Plays a role in innate antiviral immune response by bridging the pattern recognition receptors RIGI and MDA5/IFIT1 to the MAVS complex at the mitochondrion. Promotes proteolytic activation of MAP3K1. Involved in the BMP signaling pathway. Required for normal embryonic development. As part of the MCIA complex, involved in the assembly of the mitochondrial complex I. This chain is Evolutionarily conserved signaling intermediate in Toll pathway, mitochondrial, found in Macaca fascicularis (Crab-eating macaque).